The primary structure comprises 698 residues: DNA ligase (698 aa).

Residues 40-44 (DDVYD), 89-90 (SL), and Glu-123 each bind NAD(+). Lys-125 acts as the N6-AMP-lysine intermediate in catalysis. Residues Arg-146, Glu-184, Lys-300, and Lys-324 each coordinate NAD(+). Positions 417, 420, 435, and 441 each coordinate Zn(2+). Positions 618–698 (SSASPVAGKA…EWLALTGAAD (81 aa)) constitute a BRCT domain.

The protein belongs to the NAD-dependent DNA ligase family. LigA subfamily. Mg(2+) is required as a cofactor. The cofactor is Mn(2+).

The catalysed reaction is NAD(+) + (deoxyribonucleotide)n-3'-hydroxyl + 5'-phospho-(deoxyribonucleotide)m = (deoxyribonucleotide)n+m + AMP + beta-nicotinamide D-nucleotide.. DNA ligase that catalyzes the formation of phosphodiester linkages between 5'-phosphoryl and 3'-hydroxyl groups in double-stranded DNA using NAD as a coenzyme and as the energy source for the reaction. It is essential for DNA replication and repair of damaged DNA. In Paramagnetospirillum magneticum (strain ATCC 700264 / AMB-1) (Magnetospirillum magneticum), this protein is DNA ligase.